An 875-amino-acid polypeptide reads, in one-letter code: Serrate RNA effector molecule homolog (875 aa).

The segment at M1–D90 is disordered. Residue G2 is modified to N-acetylglycine. A Phosphoserine modification is found at S4. Y8 is subject to Phosphotyrosine. Over residues Y8–L73 the composition is skewed to basic and acidic residues. S67, S74, and S136 each carry phosphoserine. Residue K150 forms a Glycyl lysine isopeptide (Lys-Gly) (interchain with G-Cter in SUMO2) linkage. The disordered stretch occupies residues E272–C411. A compositionally biased stretch (basic and acidic residues) spans E297 to A345. Residues S369–E386 are compositionally biased toward acidic residues. Residues E387 to C411 are compositionally biased toward basic and acidic residues. Phosphoserine occurs at positions 492 and 539. T543 bears the Phosphothreonine mark. A Phosphoserine modification is found at S569. Residues E571–N597 are disordered. A Phosphothreonine modification is found at T670. The residue at position 678 (S678) is a Phosphoserine. An omega-N-methylarginine mark is found at R832, R839, and R849. The segment at N834–V853 is disordered.

Belongs to the ARS2 family. As to quaternary structure, interacts with CASP8AP2 and ERBB4. Interacts with NCBP1/CBP80 and DROSHA. Interacts with LUZP4. Interacts with NCBP2/CBP20 and NCBP3. Interacts with MTREX. Widely expressed, with a preference for proliferating cells. Highly expressed in hematopoietic tissues and reduced or absent expression in parenchymal organs like liver and kidney. In the brain, expressed in the subventricular zone by niche astrocytes, ependymal cells and neural stem cells. In this cerebral context, expressed in slowly dividing cells.

It is found in the nucleus. The protein localises to the nucleoplasm. The protein resides in the cytoplasm. Functionally, acts as a mediator between the cap-binding complex (CBC) and the primary microRNAs (miRNAs) processing machinery during cell proliferation. Contributes to the stability and delivery of capped primary miRNA transcripts to the primary miRNA processing complex containing DGCR8 and DROSHA, thereby playing a role in RNA-mediated gene silencing (RNAi) by miRNAs. Binds capped RNAs (m7GpppG-capped RNA); however interaction is probably mediated via its interaction with NCBP1/CBP80 component of the CBC complex. Involved in cell cycle progression at S phase. Does not directly confer arsenite resistance but rather modulates arsenic sensitivity. Independently of its activity on miRNAs, necessary and sufficient to promote neural stem cell self-renewal. Does so by directly binding SOX2 promoter and positively regulating its transcription. In Mus musculus (Mouse), this protein is Serrate RNA effector molecule homolog (Srrt).